We begin with the raw amino-acid sequence, 213 residues long: N-(5'-phosphoribosyl)anthranilate isomerase (213 aa).

It belongs to the TrpF family.

The catalysed reaction is N-(5-phospho-beta-D-ribosyl)anthranilate = 1-(2-carboxyphenylamino)-1-deoxy-D-ribulose 5-phosphate. It participates in amino-acid biosynthesis; L-tryptophan biosynthesis; L-tryptophan from chorismate: step 3/5. The chain is N-(5'-phosphoribosyl)anthranilate isomerase from Leptospira interrogans serogroup Icterohaemorrhagiae serovar copenhageni (strain Fiocruz L1-130).